The primary structure comprises 227 residues: MMVAHTAQQLDLREKLLTNGVHSLSDIELLAVFISSGNNKKSCLQLAYELTKHLGNLRNILNADLQSFKSIHGLGEVRYAQLQAAKEICHRSDFIHLQKEIRLSNTQQTYAFLKKRLRDYKNETFAALFLDNQHRIIAYEELFSGTINTATVYPRPIVERVLQLNAAALILAHNHPSGLSDASQQDLAITERIRDALDLVDARLLDHIVIGDNEVYSIFAENKWVCN.

The region spanning 102-225 is the MPN domain; it reads RLSNTQQTYA…YSIFAENKWV (124 aa). Zn(2+)-binding residues include histidine 173, histidine 175, and aspartate 186. The JAMM motif signature appears at 173-186; sequence HNHPSGLSDASQQD.

This sequence belongs to the UPF0758 family.

This is UPF0758 protein lpg2489 from Legionella pneumophila subsp. pneumophila (strain Philadelphia 1 / ATCC 33152 / DSM 7513).